Reading from the N-terminus, the 275-residue chain is N-(5'-phosphoribosyl)anthranilate isomerase 1, chloroplastic (275 aa).

A chloroplast-targeting transit peptide spans M1–S32.

It belongs to the TrpF family. Expressed in roots and shoots.

It localises to the plastid. The protein localises to the chloroplast. The enzyme catalyses N-(5-phospho-beta-D-ribosyl)anthranilate = 1-(2-carboxyphenylamino)-1-deoxy-D-ribulose 5-phosphate. It functions in the pathway amino-acid biosynthesis; L-tryptophan biosynthesis; L-tryptophan from chorismate: step 3/5. In terms of biological role, catalyzes the conversion of 5-phosphoribosylanthranilate to l-(O-carboxyphenylamino)-l-deoxyribulose-5-phosphate, which is the third step of the tryptophan biosynthetic pathway. The protein is N-(5'-phosphoribosyl)anthranilate isomerase 1, chloroplastic (PAI1) of Arabidopsis thaliana (Mouse-ear cress).